We begin with the raw amino-acid sequence, 296 residues long: MSAHIINGTEIAAAIREEIRSEVIALKAKAGIVPGLATVLVGDDPASHSYVDSKIKMCQNLGIYSEHHPLPQNATIEDLLTLIAKLNADPKISGILVQVPLPAQISESLVLNAINPDKDVDGFHPVNVGRMCLGEPCFLPCTPHGVQELLIRSGIKIEGTHVVIVGRSNLVGKPLANILLQKAPGANATVTICHSGTKNLPEITRQADILVAAMGKPKFITSDMVREGAVVIDVGTTCIGYTPEGKRILSGDVDFEEVKEKAFAITPVPKGVGPMTIIMLMLNTLTAAKRAAGLIK.

NADP(+) contacts are provided by residues 166–168 (GRS), Ser195, and Thr236.

The protein belongs to the tetrahydrofolate dehydrogenase/cyclohydrolase family. In terms of assembly, homodimer.

The enzyme catalyses (6R)-5,10-methylene-5,6,7,8-tetrahydrofolate + NADP(+) = (6R)-5,10-methenyltetrahydrofolate + NADPH. It catalyses the reaction (6R)-5,10-methenyltetrahydrofolate + H2O = (6R)-10-formyltetrahydrofolate + H(+). The protein operates within one-carbon metabolism; tetrahydrofolate interconversion. Functionally, catalyzes the oxidation of 5,10-methylenetetrahydrofolate to 5,10-methenyltetrahydrofolate and then the hydrolysis of 5,10-methenyltetrahydrofolate to 10-formyltetrahydrofolate. This chain is Bifunctional protein FolD, found in Dehalococcoides mccartyi (strain ATCC BAA-2100 / JCM 16839 / KCTC 5957 / BAV1).